Reading from the N-terminus, the 360-residue chain is Phosphoserine aminotransferase (360 aa).

Arg-41 provides a ligand contact to L-glutamate. Residues Trp-101, Thr-152, Asp-172, and Gln-195 each coordinate pyridoxal 5'-phosphate. Lys-196 is subject to N6-(pyridoxal phosphate)lysine. Position 237–238 (237–238 (NT)) interacts with pyridoxal 5'-phosphate.

Belongs to the class-V pyridoxal-phosphate-dependent aminotransferase family. SerC subfamily. Homodimer. It depends on pyridoxal 5'-phosphate as a cofactor.

The protein localises to the cytoplasm. The catalysed reaction is O-phospho-L-serine + 2-oxoglutarate = 3-phosphooxypyruvate + L-glutamate. It carries out the reaction 4-(phosphooxy)-L-threonine + 2-oxoglutarate = (R)-3-hydroxy-2-oxo-4-phosphooxybutanoate + L-glutamate. It functions in the pathway amino-acid biosynthesis; L-serine biosynthesis; L-serine from 3-phospho-D-glycerate: step 2/3. It participates in cofactor biosynthesis; pyridoxine 5'-phosphate biosynthesis; pyridoxine 5'-phosphate from D-erythrose 4-phosphate: step 3/5. Functionally, catalyzes the reversible conversion of 3-phosphohydroxypyruvate to phosphoserine and of 3-hydroxy-2-oxo-4-phosphonooxybutanoate to phosphohydroxythreonine. This is Phosphoserine aminotransferase from Burkholderia ambifaria (strain MC40-6).